Here is a 335-residue protein sequence, read N- to C-terminus: Nucleoid-associated protein YejK (335 aa).

Belongs to the YejK family.

The protein localises to the cytoplasm. It localises to the nucleoid. This Salmonella schwarzengrund (strain CVM19633) protein is Nucleoid-associated protein YejK.